A 144-amino-acid chain; its full sequence is Large ribosomal subunit protein uL11 (144 aa).

It belongs to the universal ribosomal protein uL11 family. In terms of assembly, part of the ribosomal stalk of the 50S ribosomal subunit. Interacts with L10 and the large rRNA to form the base of the stalk. L10 forms an elongated spine to which L12 dimers bind in a sequential fashion forming a multimeric L10(L12)X complex. Post-translationally, one or more lysine residues are methylated.

Forms part of the ribosomal stalk which helps the ribosome interact with GTP-bound translation factors. This Neisseria meningitidis serogroup B (strain ATCC BAA-335 / MC58) protein is Large ribosomal subunit protein uL11.